The sequence spans 212 residues: Probable chemoreceptor glutamine deamidase CheD (212 aa).

This sequence belongs to the CheD family.

It carries out the reaction L-glutaminyl-[protein] + H2O = L-glutamyl-[protein] + NH4(+). Its function is as follows. Probably deamidates glutamine residues to glutamate on methyl-accepting chemotaxis receptors (MCPs), playing an important role in chemotaxis. This is Probable chemoreceptor glutamine deamidase CheD from Bordetella parapertussis (strain 12822 / ATCC BAA-587 / NCTC 13253).